Reading from the N-terminus, the 564-residue chain is Dihydroxy-acid dehydratase (564 aa).

Cys-53 lines the [2Fe-2S] cluster pocket. Asp-85 serves as a coordination point for Mg(2+). Cys-126 serves as a coordination point for [2Fe-2S] cluster. Mg(2+) is bound by residues Asp-127 and Lys-128. Residue Lys-128 is modified to N6-carboxylysine. Cys-203 contacts [2Fe-2S] cluster. Glu-454 serves as a coordination point for Mg(2+). The Proton acceptor role is filled by Ser-480.

The protein belongs to the IlvD/Edd family. In terms of assembly, homodimer. The cofactor is [2Fe-2S] cluster. Requires Mg(2+) as cofactor.

The enzyme catalyses (2R)-2,3-dihydroxy-3-methylbutanoate = 3-methyl-2-oxobutanoate + H2O. It carries out the reaction (2R,3R)-2,3-dihydroxy-3-methylpentanoate = (S)-3-methyl-2-oxopentanoate + H2O. The protein operates within amino-acid biosynthesis; L-isoleucine biosynthesis; L-isoleucine from 2-oxobutanoate: step 3/4. It participates in amino-acid biosynthesis; L-valine biosynthesis; L-valine from pyruvate: step 3/4. In terms of biological role, functions in the biosynthesis of branched-chain amino acids. Catalyzes the dehydration of (2R,3R)-2,3-dihydroxy-3-methylpentanoate (2,3-dihydroxy-3-methylvalerate) into 2-oxo-3-methylpentanoate (2-oxo-3-methylvalerate) and of (2R)-2,3-dihydroxy-3-methylbutanoate (2,3-dihydroxyisovalerate) into 2-oxo-3-methylbutanoate (2-oxoisovalerate), the penultimate precursor to L-isoleucine and L-valine, respectively. In Leifsonia xyli subsp. xyli (strain CTCB07), this protein is Dihydroxy-acid dehydratase.